Consider the following 171-residue polypeptide: Large ribosomal subunit protein uL10 (171 aa).

It belongs to the universal ribosomal protein uL10 family. In terms of assembly, part of the ribosomal stalk of the 50S ribosomal subunit. The N-terminus interacts with L11 and the large rRNA to form the base of the stalk. The C-terminus forms an elongated spine to which L12 dimers bind in a sequential fashion forming a multimeric L10(L12)X complex.

Forms part of the ribosomal stalk, playing a central role in the interaction of the ribosome with GTP-bound translation factors. This Nitrosomonas europaea (strain ATCC 19718 / CIP 103999 / KCTC 2705 / NBRC 14298) protein is Large ribosomal subunit protein uL10.